We begin with the raw amino-acid sequence, 511 residues long: Ribose import ATP-binding protein RbsA (511 aa).

2 ABC transporter domains span residues 9–245 (FEAK…VGRD) and 261–506 (LRAE…LPRR). ATP is bound at residue 41 to 48 (GENGAGKS).

It belongs to the ABC transporter superfamily. Ribose importer (TC 3.A.1.2.1) family. As to quaternary structure, the complex is composed of an ATP-binding protein (RbsA), two transmembrane proteins (RbsC) and a solute-binding protein (RbsB).

The protein localises to the cell inner membrane. It catalyses the reaction D-ribose(out) + ATP + H2O = D-ribose(in) + ADP + phosphate + H(+). In terms of biological role, part of the ABC transporter complex RbsABC involved in ribose import. Responsible for energy coupling to the transport system. The protein is Ribose import ATP-binding protein RbsA of Rhodopirellula baltica (strain DSM 10527 / NCIMB 13988 / SH1).